Consider the following 75-residue polypeptide: Small ribosomal subunit protein bS18 (75 aa).

This sequence belongs to the bacterial ribosomal protein bS18 family. In terms of assembly, part of the 30S ribosomal subunit. Forms a tight heterodimer with protein bS6.

In terms of biological role, binds as a heterodimer with protein bS6 to the central domain of the 16S rRNA, where it helps stabilize the platform of the 30S subunit. This Shewanella frigidimarina (strain NCIMB 400) protein is Small ribosomal subunit protein bS18.